A 57-amino-acid polypeptide reads, in one-letter code: Large ribosomal subunit protein eL37 (57 aa).

Cysteine 20, cysteine 23, cysteine 35, and cysteine 38 together coordinate Zn(2+). The segment at 20–38 (CRRCGEKSYHKQKKVCASC) adopts a C4-type zinc-finger fold.

The protein belongs to the eukaryotic ribosomal protein eL37 family. The cofactor is Zn(2+).

Binds to the 23S rRNA. The sequence is that of Large ribosomal subunit protein eL37 from Natronomonas pharaonis (strain ATCC 35678 / DSM 2160 / CIP 103997 / JCM 8858 / NBRC 14720 / NCIMB 2260 / Gabara) (Halobacterium pharaonis).